The following is a 220-amino-acid chain: 3-keto-L-gulonate-6-phosphate decarboxylase SgbH (220 aa).

D11 is a binding site for substrate. E33 and D62 together coordinate Mg(2+). A substrate-binding site is contributed by R192.

This sequence belongs to the HPS/KGPDC family. KGPDC subfamily. As to quaternary structure, homodimer. Mg(2+) serves as cofactor.

The catalysed reaction is 3-dehydro-L-gulonate 6-phosphate + H(+) = L-xylulose 5-phosphate + CO2. In terms of biological role, catalyzes the decarboxylation of 3-keto-L-gulonate-6-P into L-xylulose-5-P. May be involved in the utilization of 2,3-diketo-L-gulonate. The polypeptide is 3-keto-L-gulonate-6-phosphate decarboxylase SgbH (sgbH) (Escherichia coli (strain K12)).